A 172-amino-acid chain; its full sequence is Disulfide bond formation protein B (172 aa).

Topologically, residues 1–11 are cytoplasmic; the sequence is MNPFRWSFRAQ. Residues 12 to 28 form a helical membrane-spanning segment; the sequence is FLLGFLACAGLLAYAIY. At 29-46 the chain is on the periplasmic side; sequence VQLHLGLEPCPLCIFQRI. Cysteine 38 and cysteine 41 are disulfide-bonded. Residues 47 to 63 form a helical membrane-spanning segment; that stretch reads AFAALAMFFLLGALHGP. The Cytoplasmic segment spans residues 64-70; it reads RAAAGRK. A helical membrane pass occupies residues 71-88; it reads VYGVLSFIAAGVGMGIAA. The Periplasmic portion of the chain corresponds to 89–145; that stretch reads RHVWVQIRPKDMMSSCGPPLSFLSETMGPFEVFRTVLTGTGDCGNIDWRFLGLSMPM. The cysteines at positions 104 and 131 are disulfide-linked. Residues 146–164 traverse the membrane as a helical segment; sequence WSMVWFVGLALWALYAGFK. The Cytoplasmic portion of the chain corresponds to 165–172; it reads ARRSSVHH.

The protein belongs to the DsbB family.

It localises to the cell inner membrane. Required for disulfide bond formation in some periplasmic proteins. Acts by oxidizing the DsbA protein. The protein is Disulfide bond formation protein B of Xanthomonas euvesicatoria pv. vesicatoria (strain 85-10) (Xanthomonas campestris pv. vesicatoria).